Here is a 410-residue protein sequence, read N- to C-terminus: MTANSPIHVYSEIGKLKKVMLHRPGKEIENLMPDYLERLLFDDIPFLENAQKEHDAFAEALRNEGIEVLYLEKLAAESLINEEVRTAFIDEYIAEANIRGRATKEAIRNMLMSIEDNQELIDKTMAGIQKSELPEISDEEKGLTDLVESDYPFAIDPMPNLYFTRDPFATIGAGVSLNHMFSETRNRETLYGKYIFTHHPEYGGKVPMVYDRSENTRIEGGDELVLSKDVLAVGISQRTDAASIEKLLVNIFKQNLGFKKVLAFEFANNRKFMHLDTVFTMVDYDKFTIHPEIEGDLRVYSVTYENDKLKIVEEKGDLAELLAANLGVEKVELIRCGGDNIVAAGREQWNDGSNTLTIAPGVVVVYNRNTITNAILESKGLRLVKIEGSELVRGRGGPRCMSMPFEREDI.

Cys400 (amidino-cysteine intermediate) is an active-site residue.

This sequence belongs to the arginine deiminase family.

Its subcellular location is the cytoplasm. The catalysed reaction is L-arginine + H2O = L-citrulline + NH4(+). The protein operates within amino-acid degradation; L-arginine degradation via ADI pathway; carbamoyl phosphate from L-arginine: step 1/2. In Streptococcus uberis (strain ATCC BAA-854 / 0140J), this protein is Arginine deiminase.